A 247-amino-acid chain; its full sequence is MSKLFWAMLSFITRLPVPRRWSQGLDFEHYSRGIITFPLIGLLLGAISGLVFMVLQAWCGVPLAALFSVLVLALMTGGFHLDGLADTCDGVFSARSRDRMLEIMRDSRLGTHGGLALIFVVLAKILVLSELTLRGEPILASLAAACAVSRGTAALLMYRHRYAREEGLGNVFIGKIDGRQTCVTLGLAAIFAAVLLPGMHGVAAMVVTMVAIFILGQLLKRTLGGQTGDTLGAAIELGELVFLLALL.

A run of 5 helical transmembrane segments spans residues I34–V54, C59–F79, G113–L133, I138–Y158, and V194–I214.

Belongs to the CobS family. It depends on Mg(2+) as a cofactor.

It is found in the cell inner membrane. It catalyses the reaction alpha-ribazole + adenosylcob(III)inamide-GDP = adenosylcob(III)alamin + GMP + H(+). The enzyme catalyses alpha-ribazole 5'-phosphate + adenosylcob(III)inamide-GDP = adenosylcob(III)alamin 5'-phosphate + GMP + H(+). It participates in cofactor biosynthesis; adenosylcobalamin biosynthesis; adenosylcobalamin from cob(II)yrinate a,c-diamide: step 7/7. Its function is as follows. Joins adenosylcobinamide-GDP and alpha-ribazole to generate adenosylcobalamin (Ado-cobalamin). Also synthesizes adenosylcobalamin 5'-phosphate from adenosylcobinamide-GDP and alpha-ribazole 5'-phosphate. The protein is Adenosylcobinamide-GDP ribazoletransferase of Escherichia coli O127:H6 (strain E2348/69 / EPEC).